The primary structure comprises 439 residues: Ribosomal protein uS12 methylthiotransferase RimO (439 aa).

The MTTase N-terminal domain occupies 7 to 119 (KQLCLISLGC…IDILIAKKQN (113 aa)). [4Fe-4S] cluster is bound by residues C16, C50, C82, C151, C155, and C158. One can recognise a Radical SAM core domain in the interval 137-368 (TGSSVHAYVK…ALKHQNHSFK (232 aa)).

It belongs to the methylthiotransferase family. RimO subfamily. Requires [4Fe-4S] cluster as cofactor.

Its subcellular location is the cytoplasm. The enzyme catalyses L-aspartate(89)-[ribosomal protein uS12]-hydrogen + (sulfur carrier)-SH + AH2 + 2 S-adenosyl-L-methionine = 3-methylsulfanyl-L-aspartate(89)-[ribosomal protein uS12]-hydrogen + (sulfur carrier)-H + 5'-deoxyadenosine + L-methionine + A + S-adenosyl-L-homocysteine + 2 H(+). Catalyzes the methylthiolation of an aspartic acid residue of ribosomal protein uS12. This is Ribosomal protein uS12 methylthiotransferase RimO from Helicobacter pylori (strain HPAG1).